Consider the following 239-residue polypeptide: Fatty acid metabolism regulator protein (239 aa).

The HTH gntR-type domain maps to Gln-6 to Phe-74. The H-T-H motif DNA-binding region spans Glu-34–Gln-53.

In terms of assembly, homodimer.

It is found in the cytoplasm. Functionally, multifunctional regulator of fatty acid metabolism. This is Fatty acid metabolism regulator protein from Shigella flexneri.